A 522-amino-acid polypeptide reads, in one-letter code: Penicillin-sensitive carboxypeptidase A (522 aa).

The Acyl-ester intermediate role is filled by S94. The Proton acceptor role is filled by K97. S351 is a catalytic residue. Residue K461 coordinates substrate.

This sequence belongs to the peptidase S13 family.

The enzyme catalyses Preferential cleavage: (Ac)2-L-Lys-D-Ala-|-D-Ala. Also transpeptidation of peptidyl-alanyl moieties that are N-acyl substituents of D-alanine.. Its activity is regulated as follows. Inhibited by penicillin G. Carboxypeptidase. This is Penicillin-sensitive carboxypeptidase A (pscA) from Dictyostelium discoideum (Social amoeba).